We begin with the raw amino-acid sequence, 869 residues long: MAEVSIEKLAADIGTSVDRLVKQFKDADIVKAANENVTEDEKRQLLDYLSKQHGGTGSEAPKRMTLQRKTTSTLNMGKSKAVTVEVRKKRTYVKRTDVEEARLAEEETARALAEQQAQLEAEKAAAEEAKKAAEEKAKKAAESKAKAEAERLARAEKAKKEAEARQAEESALSPEEKAEQERVRTEAENIRKKQEQESQRKLEEDAKKAADEARKLAEENSRRWKEEEERRKKQEAEEVHVHSNRYAQEAEDADDIKIERGGRRRKKSKRNAGSDLKHAFNKPAQPVERIVRLGETITVSDLASKLAIKATEVIKAMMKMGEMATINQVLDQETAVLVVEEMGHKYELVNDNALEDELLADKISSELASRAPVVTIMGHVDHGKTSLLDYIRRAKVAAGEAGGITQHIGAYSVETDNGRIAFLDTPGHAAFTAMRARGATATDIVILVVAADDGVMPQTKEAVQHSKAAGVPLIVAVNKMDKESADPDRVKTELSQLEVISEEWGGEHQFVNVSAKTGEGIDALLEAISLQAELLDLKAPPTGSAKGIVIESRLDKGRGPVASVLVQEGQLKAGDILLCGIEYGRVRAMRDENGKDVAIAGPSTPVEVLGLSGVPVAGEDALVVQDERKAREVATKRNAKQREIKLAKQQKAKLENMFANMEAGDVSELNIVLKADVQGSVEAISDSLTKLSTSEVKVNIVGSGVGGITETDASLAAASSAIVVGFNVRADASARRVIEAEEIDLRYYSVIYSLIDEVKMAMTGMLAPEFKQEIIGLAEVRDVFKSPKLGAIAGCMVVEGTIKRSNPIRVLRENVVIYEGELESLRRFKDDVQEVRNGVECGIGVKNYNDVKVGDQIEVFEIVQVEREL.

2 disordered regions span residues 51–78 and 105–277; these read KQHGGTGSEAPKRMTLQRKTTSTLNMGK and EEET…SDLK. The segment covering 67–76 has biased composition (polar residues); it reads QRKTTSTLNM. Positions 110 to 119 are enriched in low complexity; it reads RALAEQQAQL. A compositionally biased stretch (basic and acidic residues) spans 120–241; the sequence is EAEKAAAEEA…KKQEAEEVHV (122 aa). Residues 369-542 form the tr-type G domain; the sequence is SRAPVVTIMG…ELLDLKAPPT (174 aa). Residues 378–385 are G1; the sequence is GHVDHGKT. Residue 378 to 385 participates in GTP binding; the sequence is GHVDHGKT. The interval 403 to 407 is G2; sequence GITQH. The interval 424-427 is G3; the sequence is DTPG. GTP contacts are provided by residues 424–428 and 478–481; these read DTPGH and NKMD. Residues 478 to 481 form a G4 region; it reads NKMD. The interval 514–516 is G5; the sequence is SAK.

It belongs to the TRAFAC class translation factor GTPase superfamily. Classic translation factor GTPase family. IF-2 subfamily.

The protein resides in the cytoplasm. One of the essential components for the initiation of protein synthesis. Protects formylmethionyl-tRNA from spontaneous hydrolysis and promotes its binding to the 30S ribosomal subunits. Also involved in the hydrolysis of GTP during the formation of the 70S ribosomal complex. The protein is Translation initiation factor IF-2 of Pseudoalteromonas atlantica (strain T6c / ATCC BAA-1087).